The sequence spans 359 residues: Double-stranded RNA-binding protein 3 (359 aa).

DRBM domains are found at residues 1–70 (MYKN…ALSS) and 87–155 (IYKN…SLRK). Residues 266–280 (EKKQSLDDPKPEMRI) are compositionally biased toward basic and acidic residues. 2 disordered regions span residues 266 to 292 (EKKQSLDDPKPEMRIKTSSPSPLSSSV) and 328 to 359 (APPPKPNPNPNSSPFITRELGNGSQEKKSLPN). The span at 328–338 (APPPKPNPNPN) shows a compositional bias: pro residues.

In terms of biological role, binds double-stranded RNA. This chain is Double-stranded RNA-binding protein 3 (DRB3), found in Arabidopsis thaliana (Mouse-ear cress).